The primary structure comprises 452 residues: Pup--protein ligase (452 aa).

Glu9 is a Mg(2+) binding site. Arg53 provides a ligand contact to ATP. Tyr55 is a Mg(2+) binding site. Residue Asp57 is the Proton acceptor of the active site. Glu63 is a binding site for Mg(2+). 2 residues coordinate ATP: Thr66 and Trp419.

The protein belongs to the Pup ligase/Pup deamidase family. Pup-conjugating enzyme subfamily.

It carries out the reaction ATP + [prokaryotic ubiquitin-like protein]-L-glutamate + [protein]-L-lysine = ADP + phosphate + N(6)-([prokaryotic ubiquitin-like protein]-gamma-L-glutamyl)-[protein]-L-lysine.. It functions in the pathway protein degradation; proteasomal Pup-dependent pathway. Its pathway is protein modification; protein pupylation. Its function is as follows. Catalyzes the covalent attachment of the prokaryotic ubiquitin-like protein modifier Pup to the proteasomal substrate proteins, thereby targeting them for proteasomal degradation. This tagging system is termed pupylation. The ligation reaction involves the side-chain carboxylate of the C-terminal glutamate of Pup and the side-chain amino group of a substrate lysine. The polypeptide is Pup--protein ligase (Rhodococcus jostii (strain RHA1)).